Here is a 483-residue protein sequence, read N- to C-terminus: Lipoamide acyltransferase component of branched-chain alpha-keto acid dehydrogenase complex, mitochondrial (483 aa).

The N-terminal 75 residues, 1–75, are a transit peptide targeting the mitochondrion; sequence MIARRIWRSH…AMATDSNSGL (75 aa). In terms of domain architecture, Lipoyl-binding spans 76–150; it reads IDVPLAQTGE…KVGETLVRLA (75 aa). Lys116 carries the post-translational modification N6-lipoyllysine. One can recognise a Peripheral subunit-binding (PSBD) domain in the interval 183 to 220; sequence LSTPAVRNLAKDLGIDINVITGTGKDGRVLKEDVLRFS. Active-site residues include His453 and Asp457.

Belongs to the 2-oxoacid dehydrogenase family. In terms of assembly, forms a 24-polypeptide structural core with octahedral symmetry. Requires (R)-lipoate as cofactor. In terms of tissue distribution, expressed in the non-photosynthetic organs such as siliques, flowers and roots.

It is found in the mitochondrion matrix. It carries out the reaction N(6)-[(R)-dihydrolipoyl]-L-lysyl-[protein] + 2-methylpropanoyl-CoA = N(6)-[(R)-S(8)-2-methylpropanoyldihydrolipoyl]-L-lysyl-[protein] + CoA. In terms of biological role, the branched-chain alpha-keto dehydrogenase complex catalyzes the overall conversion of alpha-keto acids to acyl-CoA and CO(2). It contains multiple copies of three enzymatic components: branched-chain alpha-keto acid decarboxylase (E1), lipoamide acyltransferase (E2) and lipoamide dehydrogenase (E3). Within this complex, the catalytic function of this enzyme is to accept, and to transfer to coenzyme A, acyl groups that are generated by the branched-chain alpha-keto acid decarboxylase component. Required during sugar starvation and acts under the control of a sugar-sensing mechanism involving Ser/Thr kinases and phosphatases. The chain is Lipoamide acyltransferase component of branched-chain alpha-keto acid dehydrogenase complex, mitochondrial (BCE2) from Arabidopsis thaliana (Mouse-ear cress).